The chain runs to 122 residues: Large ribosomal subunit protein uL14 (122 aa).

The protein belongs to the universal ribosomal protein uL14 family. As to quaternary structure, part of the 50S ribosomal subunit. Forms a cluster with proteins L3 and L19. In the 70S ribosome, L14 and L19 interact and together make contacts with the 16S rRNA in bridges B5 and B8.

Binds to 23S rRNA. Forms part of two intersubunit bridges in the 70S ribosome. The chain is Large ribosomal subunit protein uL14 from Rhodococcus jostii (strain RHA1).